The sequence spans 398 residues: Cobalamin import ATP-binding protein BtuD (398 aa).

The ABC transporter domain maps to 3–237 (LDVTGLDVEL…DTIRAAFDAR (235 aa)). 35 to 42 (GPNGAGKS) serves as a coordination point for ATP.

The protein belongs to the ABC transporter superfamily. In terms of assembly, the complex is composed of two ATP-binding proteins (BtuD), two transmembrane proteins (BtuC) and a solute-binding protein (BtuF).

It localises to the cell membrane. The catalysed reaction is an R-cob(III)alamin(out) + ATP + H2O = an R-cob(III)alamin(in) + ADP + phosphate + H(+). Its function is as follows. Required for corrinoid utilization. Probably part of the ABC transporter complex BtuCDF involved in cobalamin (vitamin B12) import. Probably responsible for energy coupling to the transport system. The chain is Cobalamin import ATP-binding protein BtuD (btuD) from Halobacterium salinarum (strain ATCC 29341 / DSM 671 / R1).